Reading from the N-terminus, the 591-residue chain is Aspartate--tRNA(Asp/Asn) ligase (591 aa).

Glu-176 provides a ligand contact to L-aspartate. The aspartate stretch occupies residues 200–203 (QLFK). Arg-222 contributes to the L-aspartate binding site. Residues 222-224 (RDE) and Gln-231 contribute to the ATP site. His-450 contacts L-aspartate. Glu-484 is an ATP binding site. Arg-491 contributes to the L-aspartate binding site. 536-539 (GLDR) contributes to the ATP binding site.

The protein belongs to the class-II aminoacyl-tRNA synthetase family. Type 1 subfamily. In terms of assembly, homodimer.

Its subcellular location is the cytoplasm. It catalyses the reaction tRNA(Asx) + L-aspartate + ATP = L-aspartyl-tRNA(Asx) + AMP + diphosphate. Functionally, aspartyl-tRNA synthetase with relaxed tRNA specificity since it is able to aspartylate not only its cognate tRNA(Asp) but also tRNA(Asn). Reaction proceeds in two steps: L-aspartate is first activated by ATP to form Asp-AMP and then transferred to the acceptor end of tRNA(Asp/Asn). In Bacillus anthracis (strain A0248), this protein is Aspartate--tRNA(Asp/Asn) ligase.